We begin with the raw amino-acid sequence, 433 residues long: Glutamate-1-semialdehyde 2,1-aminomutase (433 aa).

K270 bears the N6-(pyridoxal phosphate)lysine mark.

Belongs to the class-III pyridoxal-phosphate-dependent aminotransferase family. HemL subfamily. In terms of assembly, homodimer. Requires pyridoxal 5'-phosphate as cofactor.

The protein resides in the cytoplasm. The catalysed reaction is (S)-4-amino-5-oxopentanoate = 5-aminolevulinate. It functions in the pathway porphyrin-containing compound metabolism; protoporphyrin-IX biosynthesis; 5-aminolevulinate from L-glutamyl-tRNA(Glu): step 2/2. The protein is Glutamate-1-semialdehyde 2,1-aminomutase of Symbiobacterium thermophilum (strain DSM 24528 / JCM 14929 / IAM 14863 / T).